Consider the following 375-residue polypeptide: Putative F-box/kelch-repeat protein At3g24610 (375 aa).

The segment at 1–27 (MSNEAPEVEPHSKRRKKEASPSSSSGF) is disordered. One can recognise an F-box domain in the interval 25–71 (SGFLQSLPEAVAMICLARVSRLDHAALSLVSKSCRSMVLSPELYQTR). One copy of the Kelch repeat lies at 138–183 (KINVWGGCKYKHYYDWGEVFDPKTQTWADMSIPKPVREEKIYVVDS).

In Arabidopsis thaliana (Mouse-ear cress), this protein is Putative F-box/kelch-repeat protein At3g24610.